The primary structure comprises 577 residues: Arginine--tRNA ligase (577 aa).

Residues 122–132 carry the 'HIGH' region motif; the sequence is PNVAKEMHVGH.

The protein belongs to the class-I aminoacyl-tRNA synthetase family. In terms of assembly, monomer.

The protein resides in the cytoplasm. It catalyses the reaction tRNA(Arg) + L-arginine + ATP = L-arginyl-tRNA(Arg) + AMP + diphosphate. In Salmonella dublin (strain CT_02021853), this protein is Arginine--tRNA ligase.